Consider the following 377-residue polypeptide: Succinyl-diaminopimelate desuccinylase (377 aa).

Histidine 68 serves as a coordination point for Zn(2+). Residue aspartate 70 is part of the active site. Aspartate 101 serves as a coordination point for Zn(2+). Glutamate 135 serves as the catalytic Proton acceptor. Positions 136, 164, and 350 each coordinate Zn(2+).

The protein belongs to the peptidase M20A family. DapE subfamily. In terms of assembly, homodimer. It depends on Zn(2+) as a cofactor. Co(2+) serves as cofactor.

The catalysed reaction is N-succinyl-(2S,6S)-2,6-diaminopimelate + H2O = (2S,6S)-2,6-diaminopimelate + succinate. Its pathway is amino-acid biosynthesis; L-lysine biosynthesis via DAP pathway; LL-2,6-diaminopimelate from (S)-tetrahydrodipicolinate (succinylase route): step 3/3. In terms of biological role, catalyzes the hydrolysis of N-succinyl-L,L-diaminopimelic acid (SDAP), forming succinate and LL-2,6-diaminopimelate (DAP), an intermediate involved in the bacterial biosynthesis of lysine and meso-diaminopimelic acid, an essential component of bacterial cell walls. This Psychromonas ingrahamii (strain DSM 17664 / CCUG 51855 / 37) protein is Succinyl-diaminopimelate desuccinylase.